A 122-amino-acid chain; its full sequence is MIQTETRLKVADNSGAKIVYCIKVLGGSRRRYATVGDVIVVSVKEAIPNSKVKKGDVLKAVIVRTKKEIKRPDGSYIRFDENSAVLISGNNEPLGTRIFGPVARELRAKRFMKIVSLAPEVL.

The protein belongs to the universal ribosomal protein uL14 family. In terms of assembly, part of the 50S ribosomal subunit. Forms a cluster with proteins L3 and L19. In the 70S ribosome, L14 and L19 interact and together make contacts with the 16S rRNA in bridges B5 and B8.

In terms of biological role, binds to 23S rRNA. Forms part of two intersubunit bridges in the 70S ribosome. This chain is Large ribosomal subunit protein uL14, found in Desulfosudis oleivorans (strain DSM 6200 / JCM 39069 / Hxd3) (Desulfococcus oleovorans).